Reading from the N-terminus, the 239-residue chain is DNA repair protein RecO (239 aa).

The protein belongs to the RecO family.

Its function is as follows. Involved in DNA repair and RecF pathway recombination. This is DNA repair protein RecO from Aromatoleum aromaticum (strain DSM 19018 / LMG 30748 / EbN1) (Azoarcus sp. (strain EbN1)).